Consider the following 285-residue polypeptide: Probable endonuclease 4 (285 aa).

Residues His69, His109, Glu145, Asp179, His182, His216, Asp229, His231, and Glu261 each contribute to the Zn(2+) site.

The protein belongs to the AP endonuclease 2 family. Zn(2+) serves as cofactor.

It carries out the reaction Endonucleolytic cleavage to 5'-phosphooligonucleotide end-products.. Functionally, endonuclease IV plays a role in DNA repair. It cleaves phosphodiester bonds at apurinic or apyrimidinic (AP) sites, generating a 3'-hydroxyl group and a 5'-terminal sugar phosphate. In Salmonella agona (strain SL483), this protein is Probable endonuclease 4.